The sequence spans 185 residues: Large ribosomal subunit protein uL5 (185 aa).

It belongs to the universal ribosomal protein uL5 family. In terms of assembly, part of the 50S ribosomal subunit; part of the 5S rRNA/L5/L18/L25 subcomplex. Contacts the 5S rRNA and the P site tRNA. Forms a bridge to the 30S subunit in the 70S ribosome.

In terms of biological role, this is one of the proteins that bind and probably mediate the attachment of the 5S RNA into the large ribosomal subunit, where it forms part of the central protuberance. In the 70S ribosome it contacts protein S13 of the 30S subunit (bridge B1b), connecting the 2 subunits; this bridge is implicated in subunit movement. Contacts the P site tRNA; the 5S rRNA and some of its associated proteins might help stabilize positioning of ribosome-bound tRNAs. The sequence is that of Large ribosomal subunit protein uL5 from Rhizobium etli (strain CIAT 652).